Here is a 488-residue protein sequence, read N- to C-terminus: Probable metabolite transport protein YBR241C (488 aa).

Over 1–18 (MAETERLMPNGGSRETKP) the chain is Cytoplasmic. A helical membrane pass occupies residues 19 to 39 (LITGHLILGTIVACLGSIQYG). Residues 40–87 (YHIAELNAPQEFLSCSRFEAPDENISYDDTWVGQHGLKQCIALTDSQY) lie on the Vacuolar side of the membrane. Asparagine 63 carries an N-linked (GlcNAc...) asparagine glycan. Residues 88–108 (GAITSIFSIGGLFGSYYAGNW) form a helical membrane-spanning segment. At 109-121 (ANRYGRKYVSMGA) the chain is on the cytoplasmic side. The chain crosses the membrane as a helical span at residues 122-142 (SAMCMVSSLLLFFSNSYLQLL). The Vacuolar portion of the chain corresponds to 143-146 (FGRF). Residues 147 to 167 (LVGMSCGTAIVITPLFINEIA) traverse the membrane as a helical segment. Residues 168–178 (PVEWRGAMGSM) lie on the Cytoplasmic side of the membrane. Residues 179-198 (NQVSINLGILLTQTLALKYA) traverse the membrane as a helical segment. Topologically, residues 199-204 (DSYNWR) are vacuolar. Residues 205–225 (WLLFSGSVIAVANILAWLKVD) traverse the membrane as a helical segment. Topologically, residues 226–299 (ESPRWLVSHG…DPSYKKPRTV (74 aa)) are cytoplasmic. Over residues 258–279 (EIQDWQRSHGHNRDPESSEETH) the composition is skewed to basic and acidic residues. The tract at residues 258–281 (EIQDWQRSHGHNRDPESSEETHSG) is disordered. The chain crosses the membrane as a helical span at residues 300 to 320 (ILAILSCQQFCGINSIIFYGV). At 321-322 (KV) the chain is on the vacuolar side. Residues 323 to 337 (IGKILPDYSIQVNFA) traverse the membrane as a helical segment. Residues 338–344 (ISILNVV) lie on the Cytoplasmic side of the membrane. Residues 345-364 (VTLAASAIIDHVGRRPLLLA) form a helical membrane-spanning segment. The Vacuolar segment spans residues 365–390 (STTVMTAMSLLISVGLTLSVSFLLVT). A helical membrane pass occupies residues 391 to 411 (ATFVYIAAFAIGLGPIPFLII). Residues 412–419 (GELSYPQD) lie on the Cytoplasmic side of the membrane. Residues 420–442 (AATAQSFGTVCNWLATFIVGYLF) form a helical membrane-spanning segment. Residues 443-446 (PIGH) lie on the Vacuolar side of the membrane. The helical transmembrane segment at 447-463 (GLMGGYVFAIFAAIAAM) threads the bilayer. The Cytoplasmic portion of the chain corresponds to 464–488 (FATYVYKRVPETKGKTTYSEVWAGY).

Belongs to the major facilitator superfamily. Sugar transporter (TC 2.A.1.1) family.

It localises to the vacuole membrane. This is Probable metabolite transport protein YBR241C from Saccharomyces cerevisiae (strain ATCC 204508 / S288c) (Baker's yeast).